Consider the following 347-residue polypeptide: VIP36-like protein (347 aa).

The N-terminal stretch at 1-43 is a signal peptide; that stretch reads MAAASRPSWWQRWRRRAWARDGAKLLLFLLLLGSGPGPRHVRA. Residues 44–312 are Lumenal-facing; the sequence is GQAVEYLKRE…VPPTPLSGLA (269 aa). The 226-residue stretch at 48–273 folds into the L-type lectin-like domain; the sequence is EYLKREHSLS…DVISLKLFEL (226 aa). 2 residues coordinate a carbohydrate: Ser-92 and Asp-127. Ca(2+) is bound by residues Asp-158, Tyr-160, and Asn-162. 160–162 contacts a carbohydrate; the sequence is YPN. Asn-180 carries an N-linked (GlcNAc...) asparagine glycan. His-187 serves as a coordination point for a carbohydrate. A Ca(2+)-binding site is contributed by Asp-190. Cys-199 and Cys-236 are disulfide-bonded. 257–259 is a binding site for a carbohydrate; sequence GDL. The helical transmembrane segment at 313–335 threads the bilayer; sequence LFLIVFFSLVFSVFAIVIGIILY. Residues 336 to 347 are Cytoplasmic-facing; that stretch reads NKWQDQSRKRFY. The short motif at 343-345 is the Endoplasmic reticulum retention signal element; sequence RKR.

It is found in the endoplasmic reticulum membrane. Its subcellular location is the golgi apparatus membrane. Functionally, may be involved in the regulation of export from the endoplasmic reticulum of a subset of glycoproteins. May function as a regulator of ERGIC-53. This Mus musculus (Mouse) protein is VIP36-like protein (Lman2l).